A 390-amino-acid polypeptide reads, in one-letter code: Chorismate synthase (390 aa).

NADP(+) is bound by residues arginine 48 and arginine 54. FMN-binding positions include 132–134 (RSS), 244–245 (NA), glycine 289, 304–308 (KPTSS), and arginine 330. Residues 362–390 (VGAHPAGAHPAGADPAGTHPGGPGGFQPG) are disordered. Residues 363-379 (GAHPAGAHPAGADPAGT) are compositionally biased toward low complexity. Residues 380-390 (HPGGPGGFQPG) show a composition bias toward gly residues.

It belongs to the chorismate synthase family. Homotetramer. Requires FMNH2 as cofactor.

It catalyses the reaction 5-O-(1-carboxyvinyl)-3-phosphoshikimate = chorismate + phosphate. It functions in the pathway metabolic intermediate biosynthesis; chorismate biosynthesis; chorismate from D-erythrose 4-phosphate and phosphoenolpyruvate: step 7/7. Functionally, catalyzes the anti-1,4-elimination of the C-3 phosphate and the C-6 proR hydrogen from 5-enolpyruvylshikimate-3-phosphate (EPSP) to yield chorismate, which is the branch point compound that serves as the starting substrate for the three terminal pathways of aromatic amino acid biosynthesis. This reaction introduces a second double bond into the aromatic ring system. This is Chorismate synthase from Methylobacterium sp. (strain 4-46).